Here is a 127-residue protein sequence, read N- to C-terminus: Holo-[acyl-carrier-protein] synthase (127 aa).

Asp-9 and Glu-58 together coordinate Mg(2+).

Belongs to the P-Pant transferase superfamily. AcpS family. The cofactor is Mg(2+).

The protein localises to the cytoplasm. It catalyses the reaction apo-[ACP] + CoA = holo-[ACP] + adenosine 3',5'-bisphosphate + H(+). In terms of biological role, transfers the 4'-phosphopantetheine moiety from coenzyme A to a Ser of acyl-carrier-protein. This chain is Holo-[acyl-carrier-protein] synthase, found in Shewanella sp. (strain ANA-3).